A 195-amino-acid chain; its full sequence is MPYGTRYPTLAFHTGGVGESDDGMPPQPFETFCYDSALLQAKIENFNIVPYTSVLPKELFGNILPVDQCTKFFKHGAVLEVIMAGKGAAVAEGTQAIATGVGICWGKDKNGDLIGGWAAEYVEFFPTWIDDEIAESHAKMWLKKSLQHELDLRSVSKHSEFQYFHNYINIKKKFGFCLTALGFLNFENADPVVIQ.

The residue at position 53 (Ser53) is a Pyruvic acid (Ser).

It belongs to the pyruvoyl-dependent arginine decarboxylase family. As to quaternary structure, trimer of an alpha-beta dimer. Pyruvate is required as a cofactor.

It localises to the cytoplasm. The catalysed reaction is L-arginine + H(+) = agmatine + CO2. In terms of biological role, part of the AaxABC system, catalyzes the decarboxylation of L-arginine. The arginine uptake by the bacterium in the macrophage may be a virulence factor against the host innate immune response. This Chlamydia muridarum (strain MoPn / Nigg) protein is Pyruvoyl-dependent arginine decarboxylase AaxB (aaxB).